Consider the following 541-residue polypeptide: Chaperonin GroEL 1 (541 aa).

Residues 30 to 33 (TLGP), 87 to 91 (DGTTT), glycine 414, 478 to 480 (NAA), and aspartate 494 each bind ATP.

Belongs to the chaperonin (HSP60) family. Forms a cylinder of 14 subunits composed of two heptameric rings stacked back-to-back. Interacts with the co-chaperonin GroES.

Its subcellular location is the cytoplasm. It carries out the reaction ATP + H2O + a folded polypeptide = ADP + phosphate + an unfolded polypeptide.. Functionally, together with its co-chaperonin GroES, plays an essential role in assisting protein folding. The GroEL-GroES system forms a nano-cage that allows encapsulation of the non-native substrate proteins and provides a physical environment optimized to promote and accelerate protein folding. The chain is Chaperonin GroEL 1 from Thermobifida fusca (strain YX).